The sequence spans 159 residues: Ribosome maturation factor RimP (159 aa).

Belongs to the RimP family.

It localises to the cytoplasm. Functionally, required for maturation of 30S ribosomal subunits. The protein is Ribosome maturation factor RimP of Bordetella avium (strain 197N).